A 467-amino-acid polypeptide reads, in one-letter code: Protein arginine methyltransferase NDUFAF7 homolog, mitochondrial (467 aa).

This sequence belongs to the NDUFAF7 family.

The protein localises to the mitochondrion. The catalysed reaction is L-arginyl-[protein] + 2 S-adenosyl-L-methionine = N(omega),N(omega)'-dimethyl-L-arginyl-[protein] + 2 S-adenosyl-L-homocysteine + 2 H(+). Its function is as follows. Arginine methyltransferase involved in the assembly or stability of mitochondrial NADH:ubiquinone oxidoreductase complex (complex I). This chain is Protein arginine methyltransferase NDUFAF7 homolog, mitochondrial, found in Schizosaccharomyces pombe (strain 972 / ATCC 24843) (Fission yeast).